The following is a 432-amino-acid chain: Adenylosuccinate synthetase (432 aa).

GTP is bound by residues 12-18 (GDEGKGK) and 40-42 (GHT). Aspartate 13 (proton acceptor) is an active-site residue. Positions 13 and 40 each coordinate Mg(2+). IMP-binding positions include 13-16 (DEGK), 38-41 (NAGH), threonine 132, arginine 146, glutamine 226, threonine 241, and arginine 305. Catalysis depends on histidine 41, which acts as the Proton donor. Residue 301 to 307 (VVTGRKR) participates in substrate binding. Residues arginine 307, 333 to 335 (KLD), and 415 to 417 (STS) contribute to the GTP site.

The protein belongs to the adenylosuccinate synthetase family. Homodimer. The cofactor is Mg(2+).

It is found in the cytoplasm. It carries out the reaction IMP + L-aspartate + GTP = N(6)-(1,2-dicarboxyethyl)-AMP + GDP + phosphate + 2 H(+). It functions in the pathway purine metabolism; AMP biosynthesis via de novo pathway; AMP from IMP: step 1/2. In terms of biological role, plays an important role in the de novo pathway of purine nucleotide biosynthesis. Catalyzes the first committed step in the biosynthesis of AMP from IMP. This chain is Adenylosuccinate synthetase, found in Rhizobium leguminosarum bv. trifolii (strain WSM2304).